The following is a 158-amino-acid chain: Peptide deformylase (158 aa).

Residues cysteine 88 and histidine 130 each coordinate Fe cation. The active site involves glutamate 131. Histidine 134 contacts Fe cation.

It belongs to the polypeptide deformylase family. Fe(2+) is required as a cofactor.

The enzyme catalyses N-terminal N-formyl-L-methionyl-[peptide] + H2O = N-terminal L-methionyl-[peptide] + formate. Removes the formyl group from the N-terminal Met of newly synthesized proteins. Requires at least a dipeptide for an efficient rate of reaction. N-terminal L-methionine is a prerequisite for activity but the enzyme has broad specificity at other positions. The sequence is that of Peptide deformylase from Agathobacter rectalis (strain ATCC 33656 / DSM 3377 / JCM 17463 / KCTC 5835 / VPI 0990) (Eubacterium rectale).